The chain runs to 77 residues: Putative sulfur carrier protein AF_0188 (77 aa).

C11 acts as the Cysteine persulfide intermediate in catalysis.

It belongs to the sulfur carrier protein TusA family.

This Archaeoglobus fulgidus (strain ATCC 49558 / DSM 4304 / JCM 9628 / NBRC 100126 / VC-16) protein is Putative sulfur carrier protein AF_0188.